Here is a 142-residue protein sequence, read N- to C-terminus: MKTFSAKPAEVKRDWYLVDASGKTLGRLASEVARRLRGKHKPEYTPHVDTGDYIVIINADKVRVSGKKAQDKMYYHHTGYIGHMKSMNFNQLMERAPERAIEFAVKGMLPKNPLGRAMFKKLKVYAGTEHKHTAQQPQALEL.

The protein belongs to the universal ribosomal protein uL13 family. In terms of assembly, part of the 50S ribosomal subunit.

Its function is as follows. This protein is one of the early assembly proteins of the 50S ribosomal subunit, although it is not seen to bind rRNA by itself. It is important during the early stages of 50S assembly. The protein is Large ribosomal subunit protein uL13 of Thioalkalivibrio sulfidiphilus (strain HL-EbGR7).